The following is a 117-amino-acid chain: UPF0102 protein Rsph17029_0461 (117 aa).

It belongs to the UPF0102 family.

This is UPF0102 protein Rsph17029_0461 from Cereibacter sphaeroides (strain ATCC 17029 / ATH 2.4.9) (Rhodobacter sphaeroides).